The chain runs to 332 residues: Glycerol-3-phosphate dehydrogenase [NAD(P)+] (332 aa).

NADPH is bound by residues W13, R33, and K107. Residues K107, G136, and S138 each contribute to the sn-glycerol 3-phosphate site. A140 contacts NADPH. Sn-glycerol 3-phosphate is bound by residues K191, D244, S254, R255, and N256. K191 acts as the Proton acceptor in catalysis. R255 provides a ligand contact to NADPH. Residue E280 coordinates NADPH.

Belongs to the NAD-dependent glycerol-3-phosphate dehydrogenase family.

The protein localises to the cytoplasm. The catalysed reaction is sn-glycerol 3-phosphate + NAD(+) = dihydroxyacetone phosphate + NADH + H(+). It catalyses the reaction sn-glycerol 3-phosphate + NADP(+) = dihydroxyacetone phosphate + NADPH + H(+). Its pathway is membrane lipid metabolism; glycerophospholipid metabolism. Functionally, catalyzes the reduction of the glycolytic intermediate dihydroxyacetone phosphate (DHAP) to sn-glycerol 3-phosphate (G3P), the key precursor for phospholipid synthesis. The chain is Glycerol-3-phosphate dehydrogenase [NAD(P)+] from Alkalilimnicola ehrlichii (strain ATCC BAA-1101 / DSM 17681 / MLHE-1).